The following is a 637-amino-acid chain: 3D-(3,5/4)-trihydroxycyclohexane-1,2-dione hydrolase (637 aa).

Glutamate 66 serves as a coordination point for thiamine diphosphate. A thiamine pyrophosphate binding region spans residues 442–522 (SLPGDLQRLW…INVLLFDNSG (81 aa)). The Mg(2+) site is built by aspartate 493 and asparagine 520.

It belongs to the TPP enzyme family. It depends on Mg(2+) as a cofactor. The cofactor is thiamine diphosphate.

It carries out the reaction 3D-3,5/4-trihydroxycyclohexane-1,2-dione + H2O = 5-deoxy-D-glucuronate + H(+). Its pathway is polyol metabolism; myo-inositol degradation into acetyl-CoA; acetyl-CoA from myo-inositol: step 3/7. Involved in the cleavage of the C1-C2 bond of 3D-(3,5/4)-trihydroxycyclohexane-1,2-dione (THcHDO) to yield 5-deoxy-glucuronate (5DG). This chain is 3D-(3,5/4)-trihydroxycyclohexane-1,2-dione hydrolase (iolD), found in Bacillus subtilis (strain 168).